We begin with the raw amino-acid sequence, 472 residues long: Glutamate-1-semialdehyde 2,1-aminomutase 2, chloroplastic (472 aa).

A chloroplast-targeting transit peptide spans 1–36 (MAATLTGSGIALGFSCSAKFSKRASSSSNRRCIKMS). Position 312 is an N6-(pyridoxal phosphate)lysine (Lys312).

It belongs to the class-III pyridoxal-phosphate-dependent aminotransferase family. HemL subfamily. In terms of assembly, homodimer. Requires pyridoxal 5'-phosphate as cofactor. In terms of tissue distribution, expressed in leaf primordia and shoot apical meristems (SAM).

Its subcellular location is the plastid. The protein localises to the chloroplast. It carries out the reaction (S)-4-amino-5-oxopentanoate = 5-aminolevulinate. It participates in porphyrin-containing compound metabolism; protoporphyrin-IX biosynthesis; 5-aminolevulinate from L-glutamyl-tRNA(Glu): step 2/2. Its pathway is porphyrin-containing compound metabolism; chlorophyll biosynthesis. Transaminase converting glutamate 1-semialdehyde (GSA) to 5-aminolevulinate (ALA). Involved in the biosynthesis of tetrapyrroles. The protein is Glutamate-1-semialdehyde 2,1-aminomutase 2, chloroplastic of Arabidopsis thaliana (Mouse-ear cress).